A 217-amino-acid polypeptide reads, in one-letter code: Pyridoxine/pyridoxamine 5'-phosphate oxidase (217 aa).

Substrate-binding positions include 14–17 and Lys-72; that span reads RKSY. Residues 67–72, 82–83, Arg-88, and Lys-89 contribute to the FMN site; these read RVVLIK and YT. Tyr-129, Arg-133, and Ser-137 together coordinate substrate. Residues 146–147 and Trp-190 each bind FMN; that span reads QS. 196–198 serves as a coordination point for substrate; the sequence is RLH. Arg-200 contributes to the FMN binding site.

It belongs to the pyridoxamine 5'-phosphate oxidase family. As to quaternary structure, homodimer. FMN serves as cofactor.

The catalysed reaction is pyridoxamine 5'-phosphate + O2 + H2O = pyridoxal 5'-phosphate + H2O2 + NH4(+). The enzyme catalyses pyridoxine 5'-phosphate + O2 = pyridoxal 5'-phosphate + H2O2. Its pathway is cofactor metabolism; pyridoxal 5'-phosphate salvage; pyridoxal 5'-phosphate from pyridoxamine 5'-phosphate: step 1/1. The protein operates within cofactor metabolism; pyridoxal 5'-phosphate salvage; pyridoxal 5'-phosphate from pyridoxine 5'-phosphate: step 1/1. In terms of biological role, catalyzes the oxidation of either pyridoxine 5'-phosphate (PNP) or pyridoxamine 5'-phosphate (PMP) into pyridoxal 5'-phosphate (PLP). The sequence is that of Pyridoxine/pyridoxamine 5'-phosphate oxidase from Acidovorax sp. (strain JS42).